A 348-amino-acid polypeptide reads, in one-letter code: Flavonol synthase/flavanone 3-hydroxylase (348 aa).

The Fe2OG dioxygenase domain maps to 209–309 (EIVYLLKINY…RMSWPVFLEP (101 aa)). Histidine 234, aspartate 236, and histidine 290 together coordinate Fe cation.

This sequence belongs to the iron/ascorbate-dependent oxidoreductase family. L-ascorbate serves as cofactor. Requires Fe cation as cofactor.

Its subcellular location is the cytoplasm. The catalysed reaction is a (2R,3R)-dihydroflavonol + 2-oxoglutarate + O2 = a flavonol + succinate + CO2 + H2O. It catalyses the reaction a (2S)-flavan-4-one + 2-oxoglutarate + O2 = a (2R,3R)-dihydroflavonol + succinate + CO2. The protein operates within secondary metabolite biosynthesis; flavonoid biosynthesis. Its function is as follows. Catalyzes the formation of flavonols from dihydroflavonols. It can act on dihydrokaempferol to produce kaempferol, on dihydroquercetin to produce quercitin and on dihydromyricetin to produce myricetin. The protein is Flavonol synthase/flavanone 3-hydroxylase (FL) of Petunia hybrida (Petunia).